The following is a 317-amino-acid chain: Olfactory receptor 8B3 (317 aa).

Topologically, residues Met-1 to Tyr-32 are extracellular. The N-linked (GlcNAc...) asparagine glycan is linked to Asn-8. Residues Leu-33–Gly-53 form a helical membrane-spanning segment. Topologically, residues Leu-54–His-59 are cytoplasmic. The helical transmembrane segment at Thr-60–Phe-80 threads the bilayer. At Ser-81–Tyr-97 the chain is on the extracellular side. A helical transmembrane segment spans residues Ala-98–Leu-118. Over Thr-119–Lys-136 the chain is Cytoplasmic. Residues Val-137 to Ala-157 form a helical membrane-spanning segment. The Extracellular segment spans residues Gly-158–Glu-199. Residues Val-200–Ser-220 traverse the membrane as a helical segment. Topologically, residues Tyr-221–Ser-242 are cytoplasmic. The helical transmembrane segment at Thr-243–Leu-263 threads the bilayer. At Lys-264–Lys-274 the chain is on the extracellular side. The chain crosses the membrane as a helical span at residues Ile-275–Leu-294. Over Arg-295–Asn-317 the chain is Cytoplasmic.

The protein belongs to the G-protein coupled receptor 1 family.

The protein localises to the cell membrane. Functionally, odorant receptor. This is Olfactory receptor 8B3 from Mus musculus (Mouse).